Here is a 269-residue protein sequence, read N- to C-terminus: uncharacterized protein (269 aa).

The next 4 helical transmembrane spans lie at 64-84 (FVYF…LAGV), 125-145 (YGIA…FLSF), 169-189 (FFIS…FLVL), and 230-250 (VFAT…IAIF).

Its subcellular location is the cell membrane. This is an uncharacterized protein from Mycoplasma genitalium (strain ATCC 33530 / DSM 19775 / NCTC 10195 / G37) (Mycoplasmoides genitalium).